The following is a 956-amino-acid chain: Glutamyl aminopeptidase (956 aa).

At M1 to H21 the chain is on the cytoplasmic side. Residues V22–L42 form a helical; Signal-anchor for type II membrane protein membrane-spanning segment. The Extracellular segment spans residues T43–G956. The disordered stretch occupies residues S48 to S87. Over residues T49 to Q62 the composition is skewed to low complexity. 2 N-linked (GlcNAc...) asparagine glycosylation sites follow: N126 and N199. E225 contributes to the substrate binding site. N326 is a glycosylation site (N-linked (GlcNAc...) asparagine). Residue G359–N363 coordinates substrate. H395 is a binding site for Zn(2+). Residue E396 is the Proton acceptor of the active site. The Zn(2+) site is built by H399 and E418. N556, N569, N599, N643, N647, N679, N764, N797, N802, and N829 each carry an N-linked (GlcNAc...) asparagine glycan. R888 contributes to the substrate binding site.

Belongs to the peptidase M1 family. In terms of assembly, homodimer; disulfide-linked. Zn(2+) is required as a cofactor.

Its subcellular location is the cell membrane. It catalyses the reaction Release of N-terminal glutamate (and to a lesser extent aspartate) from a peptide.. Its activity is regulated as follows. Substrate specificity is modulated by calcium which enhances the enzymatic activity for cleavage of acidic residues while reducing its activity with basic residues. Inhibited by aminopeptidase inhibitors amastatin and bestatin. In terms of biological role, regulates central hypertension through its calcium-modulated preference to cleave N-terminal acidic residues from peptides such as angiotensin II. The chain is Glutamyl aminopeptidase (ENPEP) from Bos taurus (Bovine).